The chain runs to 101 residues: Small ribosomal subunit protein bS18c (101 aa).

This sequence belongs to the bacterial ribosomal protein bS18 family. As to quaternary structure, part of the 30S ribosomal subunit.

It localises to the plastid. Its subcellular location is the chloroplast. The sequence is that of Small ribosomal subunit protein bS18c from Aethionema cordifolium (Lebanon stonecress).